The sequence spans 578 residues: Hyaluronan synthase 1 (578 aa).

Residues 1 to 25 (MRQQDAPKPTPAACRCSGLARRVLT) are Cytoplasmic-facing. The helical transmembrane segment at 26–46 (IAFALLILGLMTWAYAAGVPL) threads the bilayer. Topologically, residues 47 to 52 (ASDRYG) are extracellular. A helical membrane pass occupies residues 53–73 (LLAFGLYGAFLSAHLVAQSLF). Over 74-399 (AYLEHRRVAA…NALWWHRHHA (326 aa)) the chain is Cytoplasmic. The chain crosses the membrane as a helical span at residues 400 to 420 (WMTYEAVVSGLFPFFVAATVL). Residues 421–430 (RLFYAGRPWA) lie on the Extracellular side of the membrane. The helical transmembrane segment at 431–451 (LLWVLLCVQGVALAKAAFAAW) threads the bilayer. The Cytoplasmic portion of the chain corresponds to 452 to 457 (LRGCLR). The helical transmembrane segment at 458–478 (MVLLSLYAPLYMCGLLPAKFL) threads the bilayer. At 479–497 (ALVTMNQSGWGTSGRRKLA) the chain is on the extracellular side. The chain crosses the membrane as a helical span at residues 498–518 (ANYVPLLPLALWALLLLGGLV). The Cytoplasmic portion of the chain corresponds to 519–540 (RSVAHEARADWSGPSRAAEAYH). A helical transmembrane segment spans residues 541 to 561 (LAAGAGAYVGYWVAMLTLYWV). Residues 562 to 578 (GVRRLCRRRTGGYRVQV) lie on the Extracellular side of the membrane.

It belongs to the NodC/HAS family. Requires Mg(2+) as cofactor. As to expression, widely expressed. Highly expressed in ovary followed by spleen, thymus, prostate, testes and large intestine. Weakly expressed in small intestine.

The protein resides in the membrane. It carries out the reaction [hyaluronan](n) + UDP-N-acetyl-alpha-D-glucosamine = N-acetyl-beta-D-glucosaminyl-(1-&gt;4)-[hyaluronan](n) + UDP + H(+). It catalyses the reaction N-acetyl-beta-D-glucosaminyl-(1-&gt;4)-[hyaluronan](n) + UDP-alpha-D-glucuronate = [hyaluronan](n+1) + UDP + H(+). It functions in the pathway glycan biosynthesis; hyaluronan biosynthesis. Its function is as follows. Catalyzes the addition of GlcNAc or GlcUA monosaccharides to the nascent hyaluronan polymer. Therefore, it is essential to hyaluronan synthesis a major component of most extracellular matrices that has a structural role in tissues architectures and regulates cell adhesion, migration and differentiation. This is one of the isozymes catalyzing that reaction. Also able to catalyze the synthesis of chito-oligosaccharide depending on the substrate. The protein is Hyaluronan synthase 1 (HAS1) of Homo sapiens (Human).